The sequence spans 724 residues: Probable methyltransferase PMT28 (724 aa).

Residues 1 to 22 (MMERKREMGIAYFARRIKQPRG) lie on the Cytoplasmic side of the membrane. A helical; Signal-anchor for type II membrane protein transmembrane segment spans residues 23–43 (IWVKMTFIVVLGLCFVFFWSF). The Lumenal portion of the chain corresponds to 44–724 (LSSSASTFNV…LCAQKTLWRP (681 aa)). The tract at residues 63-211 (EPVSSRTKSA…ISKKRKRKGP (149 aa)) is disordered. The span at 71–98 (SAHEVSESSKLHERGKVESGSKSKEGKK) shows a compositional bias: basic and acidic residues. A compositionally biased stretch (basic residues) spans 107–125 (HETKKKKEHAVSHPHKKKD). Over residues 126-140 (VPKPVVEEVVVKEDQ) the composition is skewed to basic and acidic residues. Acidic residues predominate over residues 141-173 (EHEEAESDDSDQSNKEDGEEGTESDGNEGESDG). N-linked (GlcNAc...) asparagine glycosylation is found at asparagine 305, asparagine 316, and asparagine 568.

This sequence belongs to the methyltransferase superfamily.

Its subcellular location is the golgi apparatus membrane. This chain is Probable methyltransferase PMT28, found in Arabidopsis thaliana (Mouse-ear cress).